Consider the following 505-residue polypeptide: Maturase K (505 aa).

This sequence belongs to the intron maturase 2 family. MatK subfamily.

Its subcellular location is the plastid. The protein localises to the chloroplast. Functionally, usually encoded in the trnK tRNA gene intron. Probably assists in splicing its own and other chloroplast group II introns. The polypeptide is Maturase K (Apocynum androsaemifolium (Spreading dogbane)).